Consider the following 205-residue polypeptide: Large ribosomal subunit protein uL4 (205 aa).

The disordered stretch occupies residues 43-96; that stretch reads GKRQGTSKVKNRSAVRGGGKKPWRQKGTGRARQGSIRSPQWRGGGTVFGPTPRS. The span at 51-71 shows a compositional bias: basic residues; sequence VKNRSAVRGGGKKPWRQKGTG.

The protein belongs to the universal ribosomal protein uL4 family. Part of the 50S ribosomal subunit.

Functionally, one of the primary rRNA binding proteins, this protein initially binds near the 5'-end of the 23S rRNA. It is important during the early stages of 50S assembly. It makes multiple contacts with different domains of the 23S rRNA in the assembled 50S subunit and ribosome. In terms of biological role, forms part of the polypeptide exit tunnel. The polypeptide is Large ribosomal subunit protein uL4 (Lactobacillus helveticus (strain DPC 4571)).